The primary structure comprises 1058 residues: Carbamoyl phosphate synthase large chain (1058 aa).

The segment at 1–401 (MPKRKDIQKI…SLLKACRSLE (401 aa)) is carboxyphosphate synthetic domain. The ATP site is built by Arg-129, Arg-169, Gly-175, Gly-176, Arg-208, Ile-210, Glu-215, Gly-241, Ile-242, His-243, Gln-284, and Glu-298. The ATP-grasp 1 domain occupies 133–327 (KQLMQELDQP…IAKLAAKIAV (195 aa)). Positions 284, 298, and 300 each coordinate Mg(2+). The Mn(2+) site is built by Gln-284, Glu-298, and Asn-300. The oligomerization domain stretch occupies residues 402-546 (IGVCHNEMTS…YSTYELENES (145 aa)). Residues 547–929 (VQSNKESILV…ALYKAFEANN (383 aa)) form a carbamoyl phosphate synthetic domain region. In terms of domain architecture, ATP-grasp 2 spans 671–861 (EKALKELGIP…MAQIATKLIL (191 aa)). ATP contacts are provided by Arg-707, Ser-746, Ile-748, Glu-752, Gly-777, Val-778, His-779, Ser-780, Gln-820, and Glu-832. Positions 820, 832, and 834 each coordinate Mg(2+). Mn(2+)-binding residues include Gln-820, Glu-832, and Asn-834. The MGS-like domain occupies 930-1058 (SHLSEFGQIV…ESRCFNIEAI (129 aa)). Residues 930 to 1058 (SHLSEFGQIV…ESRCFNIEAI (129 aa)) form an allosteric domain region.

It belongs to the CarB family. In terms of assembly, composed of two chains; the small (or glutamine) chain promotes the hydrolysis of glutamine to ammonia, which is used by the large (or ammonia) chain to synthesize carbamoyl phosphate. Tetramer of heterodimers (alpha,beta)4. The cofactor is Mg(2+). Mn(2+) is required as a cofactor.

It catalyses the reaction hydrogencarbonate + L-glutamine + 2 ATP + H2O = carbamoyl phosphate + L-glutamate + 2 ADP + phosphate + 2 H(+). The enzyme catalyses hydrogencarbonate + NH4(+) + 2 ATP = carbamoyl phosphate + 2 ADP + phosphate + 2 H(+). Its pathway is amino-acid biosynthesis; L-arginine biosynthesis; carbamoyl phosphate from bicarbonate: step 1/1. It functions in the pathway pyrimidine metabolism; UMP biosynthesis via de novo pathway; (S)-dihydroorotate from bicarbonate: step 1/3. In terms of biological role, large subunit of the glutamine-dependent carbamoyl phosphate synthetase (CPSase). CPSase catalyzes the formation of carbamoyl phosphate from the ammonia moiety of glutamine, carbonate, and phosphate donated by ATP, constituting the first step of 2 biosynthetic pathways, one leading to arginine and/or urea and the other to pyrimidine nucleotides. The large subunit (synthetase) binds the substrates ammonia (free or transferred from glutamine from the small subunit), hydrogencarbonate and ATP and carries out an ATP-coupled ligase reaction, activating hydrogencarbonate by forming carboxy phosphate which reacts with ammonia to form carbamoyl phosphate. The sequence is that of Carbamoyl phosphate synthase large chain from Streptococcus pyogenes serotype M1.